We begin with the raw amino-acid sequence, 330 residues long: MTSDLETQLQQLQTEAVAAITSADTLDALETLRVSYLGKKGQLSQILKGMGKLDASERPKIGGLANQVKEALQQGLEQKKSDLNQAAIAAQLAAETLDVTMPGTYIPQGHIHPLNSTIDKALDIFVGLGYTIAQGPEMETDYYNFEALNTPPDHPARDMQDTFYLPDGNLLRTHTSAVQIHYMEDHEPPIRIAAPGRCYRRDTEDATHAAVFHQIEILAVDKGLTFTDLKGTIKVFIEQMFGDVPIRFRASYFPFTEPSAEVDVQWKGRWLEVLGCGMVDPNVLKNVGYDPEVYTGFAAGFGVERFAMVLHQIDDIRRLYTSDLRFLRQF.

Glutamate 257 is a Mg(2+) binding site.

It belongs to the class-II aminoacyl-tRNA synthetase family. Phe-tRNA synthetase alpha subunit type 1 subfamily. In terms of assembly, tetramer of two alpha and two beta subunits. Mg(2+) is required as a cofactor.

It localises to the cytoplasm. The catalysed reaction is tRNA(Phe) + L-phenylalanine + ATP = L-phenylalanyl-tRNA(Phe) + AMP + diphosphate + H(+). The protein is Phenylalanine--tRNA ligase alpha subunit of Acaryochloris marina (strain MBIC 11017).